The chain runs to 125 residues: Succinate dehydrogenase assembly factor 3, mitochondrial (125 aa).

A mitochondrion-targeting transit peptide spans 1-30; the sequence is MPGKHVSRVRALYRRILLLHRALPPDLKAL.

It belongs to the complex I LYR family. SDHAF3 subfamily. Interacts with Sdhb within an Sdha-Sdhb subcomplex.

The protein resides in the mitochondrion matrix. Its function is as follows. Plays an essential role in the assembly of succinate dehydrogenase (SDH), an enzyme complex (also referred to as respiratory complex II) that is a component of both the tricarboxylic acid (TCA) cycle and the mitochondrial electron transport chain, and which couples the oxidation of succinate to fumarate with the reduction of ubiquinone (coenzyme Q) to ubiquinol. Promotes maturation of the iron-sulfur protein subunit Sdhb of the SDH catalytic dimer, protecting it from the deleterious effects of oxidants. May act together with SDHAF1. This chain is Succinate dehydrogenase assembly factor 3, mitochondrial, found in Mus musculus (Mouse).